Consider the following 187-residue polypeptide: Elongation factor P (187 aa).

This sequence belongs to the elongation factor P family.

The protein resides in the cytoplasm. It participates in protein biosynthesis; polypeptide chain elongation. Functionally, involved in peptide bond synthesis. Stimulates efficient translation and peptide-bond synthesis on native or reconstituted 70S ribosomes in vitro. Probably functions indirectly by altering the affinity of the ribosome for aminoacyl-tRNA, thus increasing their reactivity as acceptors for peptidyl transferase. In Granulibacter bethesdensis (strain ATCC BAA-1260 / CGDNIH1), this protein is Elongation factor P.